Here is a 735-residue protein sequence, read N- to C-terminus: Protein RETICULATA-RELATED 5, chloroplastic (735 aa).

The transit peptide at 1-75 (MKPTTNGGLL…TRRAILVAPP (75 aa)) directs the protein to the chloroplast. Helical transmembrane passes span 519–539 (ASVV…FISY) and 582–602 (VIIG…AAVG). The span at 714–726 (ASQSTVEYSTTEE) shows a compositional bias: polar residues. Positions 714 to 735 (ASQSTVEYSTTEEASMDDLKNQ) are disordered.

The protein belongs to the RETICULATA family.

Its subcellular location is the plastid. The protein resides in the chloroplast membrane. Functionally, may play a role in leaf development. This is Protein RETICULATA-RELATED 5, chloroplastic from Arabidopsis thaliana (Mouse-ear cress).